The primary structure comprises 261 residues: Claudin-18 (261 aa).

Over 1 to 6 (MSTTRC) the chain is Cytoplasmic. A helical membrane pass occupies residues 7-27 (QVVGFLLSILGLAGCIVATEM). The Extracellular portion of the chain corresponds to 28 to 80 (DMWSTQDLYDNPVTAVFQYEGLWRSCVQQSSGFTECRPYLTILGLPAMLQAVR). A helical membrane pass occupies residues 81 to 101 (ALMIVGIVLSVIGLLVAIFAL). Topologically, residues 102-122 (KCIRMGNMDDSAKAKMTLTSG) are cytoplasmic. A helical membrane pass occupies residues 123-143 (IMFIIAGLCAIAGVSVFANML). The Extracellular portion of the chain corresponds to 144–174 (VTNFWMSTASMFTSMGGMVQTVQTRYTFGAA). Residues 175–195 (LFVGWVAGGLTLIGGVLMCIA) traverse the membrane as a helical segment. The required for role in regulation of RANKL-induced osteoclast differentiation stretch occupies residues 195–261 (ACRGLAPEET…QSPPSKYDYV (67 aa)). Over 196-261 (CRGLAPEETN…QSPPSKYDYV (66 aa)) the chain is Cytoplasmic. Serine 214 carries the post-translational modification Phosphoserine. The interval 228–261 (SSGFESNTRNKKIYDGGARTEDEGQSPPSKYDYV) is disordered. A compositionally biased stretch (basic and acidic residues) spans 239–249 (KIYDGGARTED).

This sequence belongs to the claudin family. In terms of assembly, interacts with TJP2/ZO-2. Interacts with TJP1/ZO-1. Interacts with YAP1 (phosphorylated); the interaction sequesters YAP1 away from the nucleus and thereby restricts transcription of YAP1 target genes. Interacts with CLDN19.

The protein resides in the cell junction. It localises to the tight junction. It is found in the cell membrane. In terms of biological role, involved in alveolar fluid homeostasis via regulation of alveolar epithelial tight junction composition and therefore ion transport and solute permeability, potentially via downstream regulation of the actin cytoskeleton organization and beta-2-adrenergic signaling. Required for lung alveolarization and maintenance of the paracellular alveolar epithelial barrier. Acts to maintain epithelial progenitor cell proliferation and organ size, via regulation of YAP1 localization away from the nucleus and thereby restriction of YAP1 target gene transcription. Acts as a negative regulator of RANKL-induced osteoclast differentiation, potentially via relocation of TJP2/ZO-2 away from the nucleus, subsequently involved in bone resorption in response to calcium deficiency. Mediates the osteoprotective effects of estrogen, potentially via acting downstream of estrogen signaling independently of RANKL signaling pathways. The protein is Claudin-18 (CLDN18) of Bos taurus (Bovine).